The primary structure comprises 511 residues: Piperic acid synthase CYP719A37 (511 aa).

The helical transmembrane segment at 7-27 threads the bilayer; that stretch reads VDPALFSAFVSIIFFFLGMFL. Cysteine 455 provides a ligand contact to heme.

The protein belongs to the cytochrome P450 family. Heme is required as a cofactor. In terms of tissue distribution, specifically expressed in immature fruits and roots. Barely detectable in young leaves and flowering spadices.

The protein localises to the membrane. It localises to the endoplasmic reticulum membrane. The enzyme catalyses (E,E)-feruperate + reduced [NADPH--hemoprotein reductase] + O2 = (E,E)-piperate + oxidized [NADPH--hemoprotein reductase] + 2 H2O + H(+). It functions in the pathway aromatic compound metabolism. Functionally, cytochrome P450 monooxygenase involved in the biosynthesis of aromatic piperamides natural products such as piperine (1-piperoyl-piperidine), the pungent principle contributing, together with several terpenoids, to the aromatic properties of black pepper fruits, and displaying numerous pharmacological activities such as antiproliferative, antitumor, antiangiogenesis, antioxidant, antidiabetic, antiobesity, cardioprotective, antimicrobial, antiaging, and immunomodulatory effects. Catalyzes the conversion of feruperic acid (5-(4-hydroxy-3-methoxyphenyl)-2,4-pentadienoic acid) to piperic acid. Inactive toward ferulic acid and feruperine. The polypeptide is Piperic acid synthase CYP719A37 (Piper nigrum (Black pepper)).